The primary structure comprises 269 residues: MRSFLNLNSIPNVAAGNSCSIKLPIGQTYEVIDLRYSGVTPSQIKNVRVELDGRLLSTYKTLNDLILENTRHKRKIKAGVVSFHFVRPEMKGVNVTDLVQQRMFALGTVGLTTCEIKFDIDEAAAGPKLSAIAQKSVGTAPSWLTMRRNFFKQLNNGTTEIADLPRPVGYRIAAIHIKAAGVDAVEFQIDGTKWRDLLKKADNDYILEQYGKAVLDNTYTIDFMLEGDVYQSVLLDQMIQDLRLKIDSTMDEQAEIIVEYMGVWSRNGF.

Homotrimer.

The protein resides in the virion. Its function is as follows. Major capsid protein. The chain is Major capsid protein P2 (II) from Pseudoalteromonas phage PM2 (Bacteriophage PM2).